Here is a 62-residue protein sequence, read N- to C-terminus: Large ribosomal subunit protein uL30 (62 aa).

It belongs to the universal ribosomal protein uL30 family. In terms of assembly, part of the 50S ribosomal subunit.

The polypeptide is Large ribosomal subunit protein uL30 (Herpetosiphon aurantiacus (strain ATCC 23779 / DSM 785 / 114-95)).